The primary structure comprises 293 residues: Vibriobactin-specific isochorismatase (293 aa).

In terms of domain architecture, Carrier spans Lys-211–Leu-287. O-(pantetheine 4'-phosphoryl)serine is present on Ser-248.

Belongs to the isochorismatase family. Pantetheine 4'-phosphate serves as cofactor.

It catalyses the reaction isochorismate + H2O = (2S,3S)-2,3-dihydroxy-2,3-dihydrobenzoate + pyruvate. It participates in siderophore biosynthesis; vibriobactin biosynthesis. Functionally, involved in the biosynthesis of the catechol siderophore vibriobactin. Vibriobactin is a chelating compound involved in transporting iron from the bacterial environment into the cell cytoplasm. This chain is Vibriobactin-specific isochorismatase (vibB), found in Vibrio cholerae serotype O1 (strain ATCC 39541 / Classical Ogawa 395 / O395).